A 187-amino-acid chain; its full sequence is NADH-quinone oxidoreductase subunit B (187 aa).

Residues 1-10 show a composition bias toward basic and acidic residues; that stretch reads MTADHNRALH. The segment at 1 to 22 is disordered; the sequence is MTADHNRALHDAPTARGGEVRQ. [4Fe-4S] cluster-binding residues include Cys66, Cys67, Cys131, and Cys161.

This sequence belongs to the complex I 20 kDa subunit family. NDH-1 is composed of 14 different subunits. Subunits NuoB, C, D, E, F, and G constitute the peripheral sector of the complex. The cofactor is [4Fe-4S] cluster.

Its subcellular location is the cell inner membrane. It carries out the reaction a quinone + NADH + 5 H(+)(in) = a quinol + NAD(+) + 4 H(+)(out). Functionally, NDH-1 shuttles electrons from NADH, via FMN and iron-sulfur (Fe-S) centers, to quinones in the respiratory chain. Couples the redox reaction to proton translocation (for every two electrons transferred, four hydrogen ions are translocated across the cytoplasmic membrane), and thus conserves the redox energy in a proton gradient. In Erythrobacter litoralis (strain HTCC2594), this protein is NADH-quinone oxidoreductase subunit B.